Consider the following 147-residue polypeptide: MVHLSGEEKSAVTALWGKVNVEEVGGETLGRLLVVYPWTQRFFESFGDLSTASAVMGNPKVKAHGKKVLAAFSEGLSHLDNLKGTFAKLSELHCDKLHVDPENFRLLGNVLVIVLSHHFGKEFTPQVQAAYQKVVAGVANALAHKYH.

Residue valine 2 is modified to N-acetylvaline. A Globin domain is found at 3–147 (HLSGEEKSAV…VANALAHKYH (145 aa)). Threonine 13 is modified (phosphothreonine). Serine 45 bears the Phosphoserine mark. Lysine 60 bears the N6-acetyllysine mark. Histidine 64 is a heme b binding site. Residue lysine 83 is modified to N6-acetyllysine. Histidine 93 serves as a coordination point for heme b. Cysteine 94 is modified (S-nitrosocysteine). At lysine 145 the chain carries N6-acetyllysine.

The protein belongs to the globin family. Heterotetramer of two alpha chains and two beta chains. In terms of tissue distribution, red blood cells.

Its function is as follows. Involved in oxygen transport from the lung to the various peripheral tissues. This is Hemoglobin subunit beta (HBB) from Lepus europaeus (European hare).